We begin with the raw amino-acid sequence, 130 residues long: Small ribosomal subunit protein uS8 (130 aa).

It belongs to the universal ribosomal protein uS8 family. Part of the 30S ribosomal subunit.

Its function is as follows. One of the primary rRNA binding proteins, it binds directly to 16S rRNA central domain where it helps coordinate assembly of the platform of the 30S subunit. In Methanothermobacter thermautotrophicus (strain ATCC 29096 / DSM 1053 / JCM 10044 / NBRC 100330 / Delta H) (Methanobacterium thermoautotrophicum), this protein is Small ribosomal subunit protein uS8.